Consider the following 218-residue polypeptide: E3 ubiquitin-protein ligase MARCHF3 (218 aa).

An RING-CH-type zinc finger spans residues 63–123 (SPFNDRPMCR…ELCHFRFAVE (61 aa)). Zn(2+) contacts are provided by Cys-71, Cys-74, Cys-87, Cys-89, His-97, Cys-100, Cys-113, and Cys-116. 2 consecutive transmembrane segments (helical) span residues 145–165 (LFGD…SGWL) and 180–200 (LEAV…LFWT).

Interacts with MARCHF2 and STX6.

Its subcellular location is the cytoplasmic vesicle membrane. The protein resides in the early endosome membrane. It carries out the reaction S-ubiquitinyl-[E2 ubiquitin-conjugating enzyme]-L-cysteine + [acceptor protein]-L-lysine = [E2 ubiquitin-conjugating enzyme]-L-cysteine + N(6)-ubiquitinyl-[acceptor protein]-L-lysine.. The protein operates within protein modification; protein ubiquitination. E3 ubiquitin-protein ligase which may be involved in endosomal trafficking. E3 ubiquitin ligases accept ubiquitin from an E2 ubiquitin-conjugating enzyme in the form of a thioester and then directly transfer the ubiquitin to targeted substrates. In Mus musculus (Mouse), this protein is E3 ubiquitin-protein ligase MARCHF3 (Marchf3).